Consider the following 489-residue polypeptide: Adenylosuccinate synthetase 2, chloroplastic (489 aa).

Residues 1-45 constitute a chloroplast transit peptide; sequence MPFSPPCLDPAAAAAASLSFLPAAAARPPAPCAVAPRSRRALRVA. GTP contacts are provided by residues 76 to 82 and 104 to 106; these read GDEGKGK and GHT. D77 serves as the catalytic Proton acceptor. Mg(2+) is bound by residues D77 and G104. IMP-binding positions include 77–80, 102–105, T194, R208, Q288, T303, and R367; these read DEGK and NAGH. H105 functions as the Proton donor in the catalytic mechanism. 363-369 provides a ligand contact to substrate; the sequence is TTTGRPR. GTP is bound by residues R369, 395-397, and 478-480; these read KLD and GVG.

Belongs to the adenylosuccinate synthetase family. In terms of assembly, homodimer. Requires Mg(2+) as cofactor.

It is found in the plastid. Its subcellular location is the chloroplast. The enzyme catalyses IMP + L-aspartate + GTP = N(6)-(1,2-dicarboxyethyl)-AMP + GDP + phosphate + 2 H(+). It participates in purine metabolism; AMP biosynthesis via de novo pathway; AMP from IMP: step 1/2. In terms of biological role, plays an important role in the de novo pathway and in the salvage pathway of purine nucleotide biosynthesis. Catalyzes the first committed step in the biosynthesis of AMP from IMP. This is Adenylosuccinate synthetase 2, chloroplastic from Oryza sativa subsp. japonica (Rice).